The chain runs to 105 residues: MKVHKGDTVLVIAGKDKGAKGKVLQAYPARNRVLVEGVNRIKKHTAISANQRGAQAGGIVTQEAPIHVSNVMVVDSDGKPTRIGYRVDEETDKRVRISKRNGKDI.

The protein belongs to the universal ribosomal protein uL24 family. In terms of assembly, part of the 50S ribosomal subunit.

Functionally, one of two assembly initiator proteins, it binds directly to the 5'-end of the 23S rRNA, where it nucleates assembly of the 50S subunit. Its function is as follows. One of the proteins that surrounds the polypeptide exit tunnel on the outside of the subunit. In Mycobacterium leprae (strain Br4923), this protein is Large ribosomal subunit protein uL24.